The sequence spans 725 residues: N-alpha-acetyltransferase 35, NatC auxiliary subunit (725 aa).

S187 bears the Phosphoserine mark. The tract at residues 548 to 573 (ERIMEEQQKGRSSKKTKKKKKVRPLS) is disordered. Positions 558 to 571 (RSSKKTKKKKKVRP) are enriched in basic residues.

The protein belongs to the MAK10 family. Component of the N-terminal acetyltransferase C (NatC) complex, which is composed of NAA35, NAA38 and NAA30.

The protein resides in the cytoplasm. In terms of biological role, auxillary component of the N-terminal acetyltransferase C (NatC) complex which catalyzes acetylation of N-terminal methionine residues. N-terminal acetylation protects proteins from ubiquitination and degradation by the N-end rule pathway. Involved in regulation of apoptosis and proliferation of smooth muscle cells. The sequence is that of N-alpha-acetyltransferase 35, NatC auxiliary subunit (NAA35) from Homo sapiens (Human).